Here is a 546-residue protein sequence, read N- to C-terminus: DDB1- and CUL4-associated factor 11 (546 aa).

A compositionally biased stretch (low complexity) spans 1 to 19 (MGSRNSSSAGSGSGDPSEG). Positions 1–40 (MGSRNSSSAGSGSGDPSEGLTRRGAGLRRSEEEEEEDEDV) are disordered. Phosphoserine is present on S75. 7 WD repeats span residues 170 to 210 (SYSQ…RKFK), 216 to 258 (DVGW…TALD), 263 to 302 (ERRF…RTLQ), 305 to 345 (SHED…EDDP), 353 to 392 (GHQD…SREG), 435 to 480 (GVLH…KKLT), and 481 to 520 (NHKA…YFQD). Positions 523-546 (PESEECASAPAPVPRSSTPFSSPQ) are disordered. Positions 537–546 (RSSTPFSSPQ) are enriched in polar residues.

As to quaternary structure, interacts with DDB1 and CUL4A.

It participates in protein modification; protein ubiquitination. May function as a substrate receptor for CUL4-DDB1 E3 ubiquitin-protein ligase complex. In Pongo abelii (Sumatran orangutan), this protein is DDB1- and CUL4-associated factor 11 (DCAF11).